We begin with the raw amino-acid sequence, 432 residues long: Trigger factor (432 aa).

One can recognise a PPIase FKBP-type domain in the interval 161-246; it reads GKRVSIDFVG…VNKVEARQLP (86 aa).

It belongs to the FKBP-type PPIase family. Tig subfamily.

It localises to the cytoplasm. It catalyses the reaction [protein]-peptidylproline (omega=180) = [protein]-peptidylproline (omega=0). Its function is as follows. Involved in protein export. Acts as a chaperone by maintaining the newly synthesized protein in an open conformation. Functions as a peptidyl-prolyl cis-trans isomerase. This chain is Trigger factor, found in Vibrio vulnificus (strain CMCP6).